The following is a 250-amino-acid chain: Probable transcriptional regulatory protein RC1_1808 (250 aa).

A disordered region spans residues 1 to 21; that stretch reads MAGHSQFKNIMHRKGAQDAKR.

It belongs to the TACO1 family.

The protein resides in the cytoplasm. This Rhodospirillum centenum (strain ATCC 51521 / SW) protein is Probable transcriptional regulatory protein RC1_1808.